The primary structure comprises 185 residues: Nuclear transcription factor Y subunit B-3 (185 aa).

The segment covering M1–V36 has biased composition (gly residues). Positions M1–Q39 are disordered. A DNA-binding region spans residues L43 to S49. The tract at residues V70 to I81 is subunit association domain (SAD). Positions K145–Q164 are disordered. The segment covering G153–Q164 has biased composition (low complexity).

This sequence belongs to the NFYB/HAP3 subunit family. In terms of assembly, heterotrimeric transcription factor composed of three components, NF-YA, NF-YB and NF-YC. NF-YB and NF-YC must interact and dimerize for NF-YA association and DNA binding. As to expression, ubiquitous.

The protein localises to the nucleus. Its function is as follows. Component of the NF-Y/HAP transcription factor complex. The NF-Y complex stimulates the transcription of various genes by recognizing and binding to a CCAAT motif in promoters. May regulate the expression of photosynthetic genes, and may be involved in chloroplast and amyloplast development. This Oryza sativa subsp. japonica (Rice) protein is Nuclear transcription factor Y subunit B-3 (NFYB3).